A 494-amino-acid polypeptide reads, in one-letter code: MGIKGLIPFLSEKVPSSISELSLESLSGESLAIDASAALYQFTIAIRDSSYFSSLVNSKGESTSHIYGLMNRCSKFLEYGIKPVFVFDSKPPELKTKTLEKRRQQREEANASLKKAISEGDKESVKKLVGRTVKVSKEMNESAKKLLRLMGVPVIEALEEAEAQCAYLVTKNLCRFVASEDTDTLVFGGAFLLRNVASSSSKKILKVDLQKVLDGLEFNFDQFIDFCILCGCDYCDTLEGVGPKTAYSLVKKYQNLEEIVNFKGGDYDDFKEAKEYFLSPKVNEYDENSVKLGTIDPEGLTEFLVQENNFSKERVEKFIEKLLKFKTKKIQTSLLSFLTAPQHNNKAKSSNKRPREPKALDCKPNTYGSGKGTNVVKKESSTIKKDEIDLTAEDLFCEPSNSDNEEDDRGRVDKNEDLFKKSENETNEIKQNQFKSKSDEKKKQEEHHTIEFNFNHRKVILIDDDDDEVVTTANSEKMNCGKCLIYYFLQKLIK.

Residues 1–106 (MGIKGLIPFL…KTLEKRRQQR (106 aa)) are N-domain. Mg(2+) is bound at residue aspartate 34. Residues arginine 47 and arginine 72 each coordinate DNA. Mg(2+)-binding residues include aspartate 88, glutamate 160, glutamate 162, aspartate 181, and aspartate 183. Residues 124–253 (SVKKLVGRTV…KTAYSLVKKY (130 aa)) are I-domain. Glutamate 160 serves as a coordination point for DNA. DNA is bound by residues glycine 231 and aspartate 233. Aspartate 233 serves as a coordination point for Mg(2+). The tract at residues 330–338 (IQTSLLSFL) is interaction with PCNA. Disordered regions lie at residues 341 to 382 (PQHN…ESST) and 395 to 426 (LFCE…ENET). Over residues 408 to 426 (DRGRVDKNEDLFKKSENET) the composition is skewed to basic and acidic residues.

This sequence belongs to the XPG/RAD2 endonuclease family. FEN1 subfamily. As to quaternary structure, interacts with PCNA. Three molecules of FEN1 bind to one PCNA trimer with each molecule binding to one PCNA monomer. PCNA stimulates the nuclease activity without altering cleavage specificity. It depends on Mg(2+) as a cofactor. Phosphorylated. Phosphorylation upon DNA damage induces relocalization to the nuclear plasma.

The protein localises to the nucleus. It is found in the nucleolus. Its subcellular location is the nucleoplasm. The protein resides in the mitochondrion. Structure-specific nuclease with 5'-flap endonuclease and 5'-3' exonuclease activities involved in DNA replication and repair. During DNA replication, cleaves the 5'-overhanging flap structure that is generated by displacement synthesis when DNA polymerase encounters the 5'-end of a downstream Okazaki fragment. It enters the flap from the 5'-end and then tracks to cleave the flap base, leaving a nick for ligation. Also involved in the long patch base excision repair (LP-BER) pathway, by cleaving within the apurinic/apyrimidinic (AP) site-terminated flap. Acts as a genome stabilization factor that prevents flaps from equilibrating into structures that lead to duplications and deletions. Also possesses 5'-3' exonuclease activity on nicked or gapped double-stranded DNA, and exhibits RNase H activity. Also involved in replication and repair of rDNA and in repairing mitochondrial DNA. The chain is Flap endonuclease 1 from Theileria parva (East coast fever infection agent).